The following is a 509-amino-acid chain: Phytase A (509 aa).

Residues 1 to 15 form the signal peptide; it reads MFLLMVPLFSYLAAA. A disulfide bond links Cys27 and Cys36. Residues Gln46, Tyr47, Arg75, His76, Arg79, Thr82, and Arg164 each contribute to the 1D-myo-inositol hexakisphosphate site. 4 cysteine pairs are disulfide-bonded: Cys65/Cys444, Cys216/Cys507, Cys266/Cys295, and Cys478/Cys486. His76 serves as the catalytic Nucleophile. 2 N-linked (GlcNAc...) asparagine glycosylation sites follow: Asn171 and Asn208. Lys314 is a binding site for 1D-myo-inositol hexakisphosphate. Residues Asn348, Asn352, and Asn367 are each glycosylated (N-linked (GlcNAc...) asparagine). Positions 376 and 377 each coordinate 1D-myo-inositol hexakisphosphate. Asn401 is a glycosylation site (N-linked (GlcNAc...) asparagine).

Belongs to the histidine acid phosphatase family. In terms of assembly, monomer.

Its subcellular location is the secreted. The enzyme catalyses 1D-myo-inositol hexakisphosphate + H2O = 1D-myo-inositol 1,2,4,5,6-pentakisphosphate + phosphate. The catalysed reaction is 1D-myo-inositol 1,2,4,5,6-pentakisphosphate + H2O = 1D-myo-inositol 1,2,5,6-tetrakisphosphate + phosphate. It catalyses the reaction 1D-myo-inositol 1,2,5,6-tetrakisphosphate + H2O = 1D-myo-inositol 1,2,6-trisphosphate + phosphate. It carries out the reaction 1D-myo-inositol 1,2,6-trisphosphate + H2O = 1D-myo-inositol 1,2-bisphosphate + phosphate. The enzyme catalyses 1D-myo-inositol 1,2-bisphosphate + H2O = 1D-myo-inositol 2-phosphate + phosphate. In terms of biological role, catalyzes the phosphate monoester hydrolysis of phytic acid (myo-inositol hexakisphosphate), which results in the stepwise formation of myo-inositol pentakis-, tetrakis-, tris-, bis-, and monophosphates, as well as the liberation of inorganic phosphate. Myo-inositol 2-monophosphate is the end product. Is also able to dephosphorylate the classic acid phosphatase substrate p-nitrophenyl phosphate. In Neurospora crassa (strain ATCC 24698 / 74-OR23-1A / CBS 708.71 / DSM 1257 / FGSC 987), this protein is Phytase A (pht-1).